The sequence spans 133 residues: Small ribosomal subunit protein bS6 (133 aa).

A disordered region spans residues 93–133 (KTAVTEPSPMMKEEPRRERRDDSAPRQERAEKKTETTEDNA). A compositionally biased stretch (basic and acidic residues) spans 103 to 133 (MKEEPRRERRDDSAPRQERAEKKTETTEDNA).

This sequence belongs to the bacterial ribosomal protein bS6 family.

Binds together with bS18 to 16S ribosomal RNA. This Alteromonas mediterranea (strain DSM 17117 / CIP 110805 / LMG 28347 / Deep ecotype) protein is Small ribosomal subunit protein bS6.